Reading from the N-terminus, the 491-residue chain is Cobyric acid synthase (491 aa).

The 190-residue stretch at 246–435 (KIDVAVIKLP…IHGIFDGANF (190 aa)) folds into the GATase cobBQ-type domain. The Nucleophile role is filled by Cys327. Residue His427 is part of the active site.

It belongs to the CobB/CobQ family. CobQ subfamily.

It functions in the pathway cofactor biosynthesis; adenosylcobalamin biosynthesis. Catalyzes amidations at positions B, D, E, and G on adenosylcobyrinic A,C-diamide. NH(2) groups are provided by glutamine, and one molecule of ATP is hydrogenolyzed for each amidation. In Clostridium acetobutylicum (strain ATCC 824 / DSM 792 / JCM 1419 / IAM 19013 / LMG 5710 / NBRC 13948 / NRRL B-527 / VKM B-1787 / 2291 / W), this protein is Cobyric acid synthase.